Here is a 54-residue protein sequence, read N- to C-terminus: uncharacterized protein (54 aa).

The chain crosses the membrane as a helical span at residues 6–26 (ILIYLLIFVAGIVIGKIRINV).

Its subcellular location is the host membrane. This is an uncharacterized protein from Acidianus convivator (ABV).